A 256-amino-acid polypeptide reads, in one-letter code: Small ribosomal subunit protein eS1 (256 aa).

Residues 1–18 (MAVGKNKRLSKGKKGIKK) show a composition bias toward basic residues. A disordered region spans residues 1–20 (MAVGKNKRLSKGKKGIKKRT). Alanine 2 bears the N-acetylalanine; partial mark.

It belongs to the eukaryotic ribosomal protein eS1 family. Component of the small ribosomal subunit. Mature ribosomes consist of a small (40S) and a large (60S) subunit. The 40S subunit contains about 33 different proteins and 1 molecule of RNA (18S). The 60S subunit contains about 49 different proteins and 3 molecules of RNA (25S, 5.8S and 5S).

The protein resides in the cytoplasm. The protein is Small ribosomal subunit protein eS1 (rps1) of Aspergillus terreus (strain NIH 2624 / FGSC A1156).